Here is a 113-residue protein sequence, read N- to C-terminus: Small ribosomal subunit protein bS6 (113 aa).

The protein belongs to the bacterial ribosomal protein bS6 family.

Functionally, binds together with bS18 to 16S ribosomal RNA. The protein is Small ribosomal subunit protein bS6 of Wigglesworthia glossinidia brevipalpis.